A 448-amino-acid polypeptide reads, in one-letter code: Chromosomal replication initiator protein DnaA (448 aa).

The tract at residues 1–73 (MNAQLKQLWT…INAIKLITSK (73 aa)) is domain I, interacts with DnaA modulators. The tract at residues 73–109 (KKYNIEFSITSEEIFNNQQLKPKSSNDNIVVNDEMTS) is domain II. The tract at residues 110-326 (ILNPKYTFDS…GALIRIVAYS (217 aa)) is domain III, AAA+ region. 4 residues coordinate ATP: Gly-154, Gly-156, Lys-157, and Thr-158. Residues 327–448 (SLTNREISVD…DDLNKKITNN (122 aa)) form a domain IV, binds dsDNA region.

It belongs to the DnaA family. In terms of assembly, oligomerizes as a right-handed, spiral filament on DNA at oriC.

It is found in the cytoplasm. Its function is as follows. Plays an essential role in the initiation and regulation of chromosomal replication. ATP-DnaA binds to the origin of replication (oriC) to initiate formation of the DNA replication initiation complex once per cell cycle. Binds the DnaA box (a 9 base pair repeat at the origin) and separates the double-stranded (ds)DNA. Forms a right-handed helical filament on oriC DNA; dsDNA binds to the exterior of the filament while single-stranded (ss)DNA is stabiized in the filament's interior. The ATP-DnaA-oriC complex binds and stabilizes one strand of the AT-rich DNA unwinding element (DUE), permitting loading of DNA polymerase. After initiation quickly degrades to an ADP-DnaA complex that is not apt for DNA replication. Binds acidic phospholipids. The chain is Chromosomal replication initiator protein DnaA from Clostridium novyi (strain NT).